Here is a 345-residue protein sequence, read N- to C-terminus: Phenylalanine--tRNA ligase alpha subunit (345 aa).

E259 is a Mg(2+) binding site.

The protein belongs to the class-II aminoacyl-tRNA synthetase family. Phe-tRNA synthetase alpha subunit type 1 subfamily. As to quaternary structure, tetramer of two alpha and two beta subunits. It depends on Mg(2+) as a cofactor.

Its subcellular location is the cytoplasm. The enzyme catalyses tRNA(Phe) + L-phenylalanine + ATP = L-phenylalanyl-tRNA(Phe) + AMP + diphosphate + H(+). This chain is Phenylalanine--tRNA ligase alpha subunit, found in Nitrosomonas europaea (strain ATCC 19718 / CIP 103999 / KCTC 2705 / NBRC 14298).